We begin with the raw amino-acid sequence, 385 residues long: 4-hydroxy-3-methylbut-2-en-1-yl diphosphate synthase (flavodoxin) 2 (385 aa).

4 residues coordinate [4Fe-4S] cluster: C281, C284, C316, and E323.

Belongs to the IspG family. [4Fe-4S] cluster is required as a cofactor.

The catalysed reaction is (2E)-4-hydroxy-3-methylbut-2-enyl diphosphate + oxidized [flavodoxin] + H2O + 2 H(+) = 2-C-methyl-D-erythritol 2,4-cyclic diphosphate + reduced [flavodoxin]. It functions in the pathway isoprenoid biosynthesis; isopentenyl diphosphate biosynthesis via DXP pathway; isopentenyl diphosphate from 1-deoxy-D-xylulose 5-phosphate: step 5/6. Functionally, converts 2C-methyl-D-erythritol 2,4-cyclodiphosphate (ME-2,4cPP) into 1-hydroxy-2-methyl-2-(E)-butenyl 4-diphosphate. The polypeptide is 4-hydroxy-3-methylbut-2-en-1-yl diphosphate synthase (flavodoxin) 2 (Streptomyces avermitilis (strain ATCC 31267 / DSM 46492 / JCM 5070 / NBRC 14893 / NCIMB 12804 / NRRL 8165 / MA-4680)).